Reading from the N-terminus, the 430-residue chain is UDP-N-acetylglucosamine 1-carboxyvinyltransferase (430 aa).

22–23 (KN) serves as a coordination point for phosphoenolpyruvate. Arginine 102 serves as a coordination point for UDP-N-acetyl-alpha-D-glucosamine. Residue cysteine 126 is the Proton donor of the active site. Cysteine 126 is modified (2-(S-cysteinyl)pyruvic acid O-phosphothioketal). UDP-N-acetyl-alpha-D-glucosamine is bound by residues 131–135 (RPVDL), 172–175 (KVSV), aspartate 317, and isoleucine 339.

Belongs to the EPSP synthase family. MurA subfamily.

It is found in the cytoplasm. It carries out the reaction phosphoenolpyruvate + UDP-N-acetyl-alpha-D-glucosamine = UDP-N-acetyl-3-O-(1-carboxyvinyl)-alpha-D-glucosamine + phosphate. The protein operates within cell wall biogenesis; peptidoglycan biosynthesis. Its function is as follows. Cell wall formation. Adds enolpyruvyl to UDP-N-acetylglucosamine. The polypeptide is UDP-N-acetylglucosamine 1-carboxyvinyltransferase (Rhizobium meliloti (strain 1021) (Ensifer meliloti)).